Consider the following 483-residue polypeptide: Regulatory protein ViaA (483 aa).

The protein belongs to the ViaA family. As to quaternary structure, homodimer. Interacts with RavA.

The protein resides in the cytoplasm. In terms of biological role, component of the RavA-ViaA chaperone complex, which may act on the membrane to optimize the function of some of the respiratory chains. ViaA stimulates the ATPase activity of RavA. The sequence is that of Regulatory protein ViaA from Escherichia coli O127:H6 (strain E2348/69 / EPEC).